The primary structure comprises 547 residues: Intercellular adhesion molecule 3 (547 aa).

A signal peptide spans 1 to 29 (MATMVPSVLWPRACWTLLVCCLLTPGVQG). The Extracellular segment spans residues 30 to 485 (QEFLLRVEPQ…VMDIEAGSSH (456 aa)). Residues 46 to 103 (GGSLFVNCSTDCPSSEKIALETSLSKELVASGMGWAAFNLSNVTGNSRILCSVYCNGS) form the Ig-like C2-type 1 domain. Residues asparagine 52, asparagine 84, asparagine 87, asparagine 101, asparagine 110, and asparagine 134 are each glycosylated (N-linked (GlcNAc...) asparagine). Cystine bridges form between cysteine 53-cysteine 96 and cysteine 57-cysteine 100. One can recognise an Ig-like C2-type 2 domain in the interval 132-197 (GQNFTLRCQV…FSCRTELDMQ (66 aa)). Cysteine 139 and cysteine 190 form a disulfide bridge. 9 N-linked (GlcNAc...) asparagine glycosylation sites follow: asparagine 206, asparagine 264, asparagine 295, asparagine 308, asparagine 320, asparagine 363, asparagine 389, asparagine 453, and asparagine 457. One can recognise an Ig-like C2-type 3 domain in the interval 234–301 (ETSWPVDCTL…IVCNVTLGGE (68 aa)). Cysteines 241 and 294 form a disulfide. The Ig-like C2-type 4 domain maps to 329–382 (GSTVTVSCMAGARVQVTLDGVPAAAPGQPAQLQLNATESDDRRSFFCSATLEVD). An intrachain disulfide couples cysteine 336 to cysteine 375. Residues 416–469 (KTTHVLQCQARGNPYPELRCLKEGSSREVPVGIPFFVNVTHNGTYQCQASSSRG) enclose the Ig-like C2-type 5 domain. A disulfide bond links cysteine 423 and cysteine 462. Residues 486 to 510 (FVPVFVAVLLTLGVVTIVLALMYVF) traverse the membrane as a helical segment. The Cytoplasmic segment spans residues 511–547 (REHKRSGSYHVREESTYLPLTSMQPTQAMGEEPSRAE).

This sequence belongs to the immunoglobulin superfamily. ICAM family. As to quaternary structure, interacts with moesin/MSN. Post-translationally, upon stimulation by a physiologic stimuli becomes rapidly and transiently phosphorylated on serine residues. As to expression, leukocytes.

Its subcellular location is the membrane. In terms of biological role, ICAM proteins are ligands for the leukocyte adhesion protein LFA-1 (integrin alpha-L/beta-2). ICAM3 is also a ligand for integrin alpha-D/beta-2. In association with integrin alpha-L/beta-2, contributes to apoptotic neutrophil phagocytosis by macrophages. The protein is Intercellular adhesion molecule 3 (ICAM3) of Pan troglodytes (Chimpanzee).